Here is a 632-residue protein sequence, read N- to C-terminus: Probable potassium transport system protein Kup 3 (632 aa).

Helical transmembrane passes span 17–37 (LFYL…TSPL), 60–80 (LISL…VLFL), 106–126 (TAIL…DAMI), 144–164 (PSLS…LFVV), 175–195 (FFGP…ISHI), 210–230 (AVSF…AVFL), 254–274 (WFLL…ALVL), 292–312 (ALLP…QAVI), 344–364 (IFVP…VLSF), 370–390 (LATA…IMAF), 401–421 (LPLA…FLGA), and 426–446 (IHDG…IMWT).

Belongs to the HAK/KUP transporter (TC 2.A.72) family.

It localises to the cell inner membrane. It catalyses the reaction K(+)(in) + H(+)(in) = K(+)(out) + H(+)(out). Its function is as follows. Transport of potassium into the cell. Likely operates as a K(+):H(+) symporter. The protein is Probable potassium transport system protein Kup 3 of Rhizobium etli (strain ATCC 51251 / DSM 11541 / JCM 21823 / NBRC 15573 / CFN 42).